Here is a 1183-residue protein sequence, read N- to C-terminus: Protein deacetylase HDAC6 (1183 aa).

A disordered region spans residues 1–61 (MTSTGQDSST…KGKMKKLSQP (61 aa)). A compositionally biased stretch (polar residues) spans 18 to 29 (NPQSPLQDSSAT). Ser-21 is modified (phosphoserine). At Arg-32 the chain carries Omega-N-methylarginine. The Nuclear export signal signature appears at 66–75 (LIVGLQGLDL). 2 histone deacetylase regions span residues 86 to 434 (GLVF…TLLG) and 512 to 830 (GLVY…SLLG). Residue His-215 is the 1 of the active site. His-641 acts as the 2 in catalysis. The tract at residues 972-1042 (ATENSANQTT…EAQEVQESEE (71 aa)) is disordered. A compositionally biased stretch (low complexity) spans 980–996 (TTSGEEASGETESFGTS). Phosphothreonine occurs at positions 990, 995, and 1005. The segment covering 997–1008 (PSSNASKQTTGA) has biased composition (polar residues). Ser-1009 is subject to Phosphoserine. Residues 1021-1035 (ELGLSSTLELSSEAQ) are compositionally biased toward low complexity. The segment at 1079–1177 (SWCPHLMAVC…NAAHQNKFGE (99 aa)) adopts a UBP-type zinc-finger fold. Positions 1081, 1083, 1101, 1104, 1113, 1116, and 1121 each coordinate Zn(2+). Residues 1122-1124 (SRY) are ubiquitin binding. Zn(2+)-binding residues include His-1128, His-1132, His-1138, Cys-1151, and Cys-1154. A ubiquitin binding region spans residues 1150–1157 (WCYLCQAY).

Belongs to the histone deacetylase family. HD type 2 subfamily. In terms of assembly, forms a trimeric complex in the nucleus consisting of BANP, HDAC6 and KHDRBS1/SAM68; HDAC6 keeps KHDRBS1 in a deacetylated state which inhibits the inclusion of CD44 alternate exons. The complex is disrupted by MAPK1/MAPK3-mediated phosphorylation of BANP which results in BANP export to the cytoplasm. This facilitates acetylation of KHDRBS1 and CD44 variant exon inclusion. Interacts with SIRT2 (via both phosphorylated, unphosphorylated, active or inactive forms); the interaction is necessary for the complex to interact with alpha-tubulin. Under proteasome impairment conditions, interacts with UBD via its histone deacetylase 1 and UBP-type zinc-finger regions. Interacts with BBIP1, CBFA2T3, CYLD, DDIT3/CHOP, ZMYND15, F-actin and HDAC11. Interacts with RIPOR2; this interaction occurs during early myogenic differentiation and prevents HDAC6 to deacetylate tubulin. Interacts with AURKA; AURKA-mediated phosphorylation of HDAC6 promotes deacetylation of alpha-tubulin. Interacts with DYSF; this interaction occurs during early myogenic differentiation. Interacts with TPPP; inhibiting the tubulin deacetylase activity of HDAC6. Interacts with DYNLL1. Interacts with ATP13A2; the interaction results in recruitment of HDAC6 to lysosomes to promote CTTN deacetylation. Interacts with CCDC141 (via the N-terminal region); inhibiting the deacetylase activity of HDAC6. Interacts with IPO7; the interaction facilitates HDAC6 nuclear translocation in dental papilla cells. The cofactor is Zn(2+). In terms of processing, phosphorylated by AURKA; phosphorylation increases HDAC6-mediated deacetylation of alpha-tubulin and subsequent disassembly of cilia. Post-translationally, ubiquitinated. Its polyubiquitination however does not lead to its degradation. Sumoylated in vitro.

The protein localises to the cytoplasm. The protein resides in the cytoskeleton. It is found in the nucleus. It localises to the perikaryon. Its subcellular location is the cell projection. The protein localises to the dendrite. The protein resides in the axon. It is found in the cilium. It localises to the microtubule organizing center. Its subcellular location is the centrosome. The protein localises to the cilium basal body. The enzyme catalyses N(6)-acetyl-L-lysyl-[protein] + H2O = L-lysyl-[protein] + acetate. The catalysed reaction is N(6)-acetyl-L-lysyl-[alpha-tubulin] + H2O = L-lysyl-[alpha-tubulin] + acetate. Its pathway is protein modification; protein ubiquitination. Functionally, deacetylates a wide range of non-histone substrates. Plays a central role in microtubule-dependent cell motility by mediating deacetylation of tubulin. Required for cilia disassembly via deacetylation of alpha-tubulin. Alpha-tubulin deacetylation results in destabilization of dynamic microtubules. Promotes deacetylation of CTTN, leading to actin polymerization, promotion of autophagosome-lysosome fusion and completion of autophagy. Deacetylates SQSTM1. Deacetylates peroxiredoxins PRDX1 and PRDX2, decreasing their reducing activity. Deacetylates antiviral protein RIGI in the presence of viral mRNAs which is required for viral RNA detection by RIGI. Sequentially deacetylates and polyubiquitinates DNA mismatch repair protein MSH2 which leads to MSH2 degradation, reducing cellular sensitivity to DNA-damaging agents and decreasing cellular DNA mismatch repair activities. Deacetylates DNA mismatch repair protein MLH1 which prevents recruitment of the MutL alpha complex (formed by the MLH1-PMS2 heterodimer) to the MutS alpha complex (formed by the MSH2-MSH6 heterodimer), leading to tolerance of DNA damage. Deacetylates RHOT1/MIRO1 which blocks mitochondrial transport and mediates axon growth inhibition. Deacetylates transcription factor SP1 which leads to increased expression of ENG, positively regulating angiogenesis. Deacetylates KHDRBS1/SAM68 which regulates alternative splicing by inhibiting the inclusion of CD44 alternate exons. Promotes odontoblast differentiation following IPO7-mediated nuclear import and subsequent repression of RUNX2 expression. In addition to its protein deacetylase activity, plays a key role in the degradation of misfolded proteins: when misfolded proteins are too abundant to be degraded by the chaperone refolding system and the ubiquitin-proteasome, mediates the transport of misfolded proteins to a cytoplasmic juxtanuclear structure called aggresome. Probably acts as an adapter that recognizes polyubiquitinated misfolded proteins and targets them to the aggresome, facilitating their clearance by autophagy. The protein is Protein deacetylase HDAC6 of Rattus norvegicus (Rat).